Reading from the N-terminus, the 119-residue chain is Large ribosomal subunit protein bL20 (119 aa).

It belongs to the bacterial ribosomal protein bL20 family.

Its function is as follows. Binds directly to 23S ribosomal RNA and is necessary for the in vitro assembly process of the 50S ribosomal subunit. It is not involved in the protein synthesizing functions of that subunit. In Brevibacillus brevis (strain 47 / JCM 6285 / NBRC 100599), this protein is Large ribosomal subunit protein bL20.